Reading from the N-terminus, the 809-residue chain is Leucine--tRNA ligase (809 aa).

The short motif at 40 to 50 (PYPSGRIHMGH) is the 'HIGH' region element. The 'KMSKS' region signature appears at 579–583 (KMSKS). Lys-582 contributes to the ATP binding site.

This sequence belongs to the class-I aminoacyl-tRNA synthetase family.

It is found in the cytoplasm. The enzyme catalyses tRNA(Leu) + L-leucine + ATP = L-leucyl-tRNA(Leu) + AMP + diphosphate. The sequence is that of Leucine--tRNA ligase from Campylobacter jejuni (strain RM1221).